The chain runs to 302 residues: Putative peptide permease protein BRA0407/BS1330_II0404 (302 aa).

The interval 1–22 (MRSSIHASRLRKMGQSIPASTG) is disordered. Transmembrane regions (helical) follow at residues 38–58 (IFGL…PLWL), 101–121 (LLVA…IGAI), 147–167 (IFLL…VVVI), 200–222 (AGLG…VVYA), 230–250 (ILLE…AASW), and 268–288 (WQWL…NFIG). An ABC transmembrane type-1 domain is found at 97 to 288 (GRISLLVAVS…LAVLAINFIG (192 aa)).

This sequence belongs to the binding-protein-dependent transport system permease family. The complex is composed of two ATP-binding proteins (BRA0404 and BRA0405), two transmembrane proteins (BRA0407 and BRA0408) and a solute-binding protein (BRA0409).

The protein localises to the cell inner membrane. Its function is as follows. Probably part of an ABC transporter complex that could be involved in peptide import. Probably responsible for the translocation of the substrate across the membrane. This is Putative peptide permease protein BRA0407/BS1330_II0404 from Brucella suis biovar 1 (strain 1330).